A 192-amino-acid polypeptide reads, in one-letter code: MKLLEEFIQEKGTVLPGNVLKVDAFLNHQIDPGLMQEMGKAFAERFKDLGITKIVTIESSGIAPAVFAGLALSVPVVFARKKKSVTLTDNLYTSTVYSYTKKKSNDISVSKQFLTDADTILVIDDFLANGQAALGLLEIAELAGAKVAGIGIVIEKSFQQGRELLNKTGIPVYSLARIASLENEEILFLEEE.

2 residues coordinate xanthine: leucine 20 and asparagine 27. 128-132 contacts 5-phospho-alpha-D-ribose 1-diphosphate; the sequence is ANGQA. Xanthine is bound at residue lysine 156.

The protein belongs to the purine/pyrimidine phosphoribosyltransferase family. Xpt subfamily. As to quaternary structure, homodimer.

The protein localises to the cytoplasm. It carries out the reaction XMP + diphosphate = xanthine + 5-phospho-alpha-D-ribose 1-diphosphate. Its pathway is purine metabolism; XMP biosynthesis via salvage pathway; XMP from xanthine: step 1/1. Its function is as follows. Converts the preformed base xanthine, a product of nucleic acid breakdown, to xanthosine 5'-monophosphate (XMP), so it can be reused for RNA or DNA synthesis. The chain is Xanthine phosphoribosyltransferase from Listeria innocua serovar 6a (strain ATCC BAA-680 / CLIP 11262).